Consider the following 747-residue polypeptide: DNA-directed RNA polymerase subunit beta' (747 aa).

Zn(2+)-binding residues include cysteine 70, cysteine 72, cysteine 97, and cysteine 100. Residues aspartate 502, aspartate 504, and aspartate 506 each contribute to the Mg(2+) site.

Belongs to the RNA polymerase beta' chain family. RpoC1 subfamily. In terms of assembly, in plastids the minimal PEP RNA polymerase catalytic core is composed of four subunits: alpha, beta, beta', and beta''. When a (nuclear-encoded) sigma factor is associated with the core the holoenzyme is formed, which can initiate transcription. The cofactor is Mg(2+). Zn(2+) serves as cofactor.

Its subcellular location is the plastid. The protein localises to the chloroplast. The catalysed reaction is RNA(n) + a ribonucleoside 5'-triphosphate = RNA(n+1) + diphosphate. DNA-dependent RNA polymerase catalyzes the transcription of DNA into RNA using the four ribonucleoside triphosphates as substrates. This is DNA-directed RNA polymerase subunit beta' from Gnetum parvifolium (Small-leaved jointfir).